Here is a 182-residue protein sequence, read N- to C-terminus: Probable RNA 2'-phosphotransferase (182 aa).

The protein belongs to the KptA/TPT1 family.

Functionally, removes the 2'-phosphate from RNA via an intermediate in which the phosphate is ADP-ribosylated by NAD followed by a presumed transesterification to release the RNA and generate ADP-ribose 1''-2''-cyclic phosphate (APPR&gt;P). May function as an ADP-ribosylase. The polypeptide is Probable RNA 2'-phosphotransferase (Herpetosiphon aurantiacus (strain ATCC 23779 / DSM 785 / 114-95)).